The following is a 404-amino-acid chain: Phosphoglycerate kinase (404 aa).

Substrate contacts are provided by residues Asp22–Asn24, Arg37, His60–Arg63, Arg119, and Arg156. Residues Lys206, Gly302, Glu333, and Gly359–Ser362 contribute to the ATP site.

This sequence belongs to the phosphoglycerate kinase family. In terms of assembly, monomer.

The protein resides in the cytoplasm. It catalyses the reaction (2R)-3-phosphoglycerate + ATP = (2R)-3-phospho-glyceroyl phosphate + ADP. The protein operates within carbohydrate degradation; glycolysis; pyruvate from D-glyceraldehyde 3-phosphate: step 2/5. The sequence is that of Phosphoglycerate kinase from Clavibacter sepedonicus (Clavibacter michiganensis subsp. sepedonicus).